The chain runs to 538 residues: Casein kinase I homolog 1 (538 aa).

The segment at S39–D61 is disordered. Low complexity predominate over residues A41–S57. Residues Y69–M353 form the Protein kinase domain. ATP-binding positions include I75–L83 and K98. Residue D188 is the Proton acceptor of the active site. 2 disordered regions span residues N366–L428 and Q474–S527. Composition is skewed to low complexity over residues Q391–Q410 and Q474–A498. 3 positions are modified to phosphoserine: S522, S523, and S527. Residues C537 and C538 are each lipidated (S-palmitoyl cysteine).

This sequence belongs to the protein kinase superfamily. CK1 Ser/Thr protein kinase family. Casein kinase I subfamily. In terms of processing, palmitoylated by AKR1.

It localises to the cell membrane. The protein localises to the mitochondrion membrane. It catalyses the reaction L-seryl-[protein] + ATP = O-phospho-L-seryl-[protein] + ADP + H(+). It carries out the reaction L-threonyl-[protein] + ATP = O-phospho-L-threonyl-[protein] + ADP + H(+). Its function is as follows. Casein kinases are operationally defined by their preferential utilization of acidic proteins such as caseins as substrates. This chain is Casein kinase I homolog 1 (YCK1), found in Saccharomyces cerevisiae (strain ATCC 204508 / S288c) (Baker's yeast).